The following is a 239-amino-acid chain: Ribonuclease 3 (239 aa).

An RNase III domain is found at 12 to 137; it reads RAKLEGLIGH…LIAAIYLDGG (126 aa). A Mg(2+)-binding site is contributed by glutamate 50. Residue aspartate 54 is part of the active site. Mg(2+) contacts are provided by aspartate 123 and glutamate 126. Residue glutamate 126 is part of the active site. The DRBM domain occupies 162-231; sequence DAKTELQEWS…ATKMLEREGI (70 aa).

This sequence belongs to the ribonuclease III family. In terms of assembly, homodimer. It depends on Mg(2+) as a cofactor.

The protein resides in the cytoplasm. It catalyses the reaction Endonucleolytic cleavage to 5'-phosphomonoester.. Its function is as follows. Digests double-stranded RNA. Involved in the processing of primary rRNA transcript to yield the immediate precursors to the large and small rRNAs (23S and 16S). Processes some mRNAs, and tRNAs when they are encoded in the rRNA operon. Processes pre-crRNA and tracrRNA of type II CRISPR loci if present in the organism. In Rhizobium johnstonii (strain DSM 114642 / LMG 32736 / 3841) (Rhizobium leguminosarum bv. viciae), this protein is Ribonuclease 3.